The following is a 409-amino-acid chain: Multidrug transporter MdfA (409 aa).

At 1 to 15 (MQTSFSPATRLGRRA) the chain is on the cytoplasmic side. The helical transmembrane segment at 16 to 36 (LLFPLCLVLFEFAAYIANDMI) threads the bilayer. At 37-52 (QPGMLAVVAEFNASVE) the chain is on the periplasmic side. Residues 53 to 73 (WVPTSMTAYLAGGMFLQWLLG) traverse the membrane as a helical segment. Topologically, residues 74 to 82 (PLSDRRGRR) are cytoplasmic. A helical transmembrane segment spans residues 83-103 (PVMLAGVAFFVVTCLAILLVN). Over 104 to 107 (SIEQ) the chain is Periplasmic. A helical membrane pass occupies residues 108 to 128 (FIAMRFLQGIGLCFIGAVGYA). The Cytoplasmic portion of the chain corresponds to 129-144 (TIQESFEEAVCIKITA). The chain crosses the membrane as a helical span at residues 145–165 (LMANVALIAPLLGPLAGAALI). Topologically, residues 166–168 (HVA) are periplasmic. Residues 169–189 (PWQTMFVLFAVLGAISFAGLW) form a helical membrane-spanning segment. The Cytoplasmic segment spans residues 190–226 (RAMPETASLKGEKLSVANMWRDYKQVLANRRFLCGSL). The helical transmembrane segment at 227–247 (ALGFASLPLLAWIAQSPVILI) threads the bilayer. The Periplasmic portion of the chain corresponds to 248–254 (SGEQLST). A helical membrane pass occupies residues 255 to 275 (FEYGILQVPIFGALIIGNLTL). Topologically, residues 276–286 (ARLSGKTSIPQ) are cytoplasmic. The helical transmembrane segment at 287-307 (LIRYGAGPMIVGLMIAAGSTL) threads the bilayer. Residues 308 to 314 (YSSHAYL) lie on the Periplasmic side of the membrane. Residues 315–335 (WMTAGLSLYAFGIGLANAGLV) traverse the membrane as a helical segment. The Cytoplasmic portion of the chain corresponds to 336 to 347 (RLTLFASDISKG). A helical membrane pass occupies residues 348–368 (TVSAAMGMISMMIFTLGIELA). At 369 to 378 (KVAYLWGDSR) the chain is on the periplasmic side. The chain crosses the membrane as a helical span at residues 379-399 (GFNLFNLMSGLLWLGLVMVFI). Over 400-409 (RRQPEAVATE) the chain is Cytoplasmic.

Belongs to the major facilitator superfamily. MdfA family. Monomer.

It is found in the cell inner membrane. Its function is as follows. Efflux pump driven by the proton motive force. Confers resistance to a broad spectrum of chemically unrelated drugs. The chain is Multidrug transporter MdfA (mdfA) from Yersinia pestis (strain D182038).